A 200-amino-acid polypeptide reads, in one-letter code: ATP-dependent Clp protease proteolytic subunit (200 aa).

Ser-102 functions as the Nucleophile in the catalytic mechanism. Residue His-127 is part of the active site.

It belongs to the peptidase S14 family. As to quaternary structure, fourteen ClpP subunits assemble into 2 heptameric rings which stack back to back to give a disk-like structure with a central cavity, resembling the structure of eukaryotic proteasomes.

It localises to the cytoplasm. It carries out the reaction Hydrolysis of proteins to small peptides in the presence of ATP and magnesium. alpha-casein is the usual test substrate. In the absence of ATP, only oligopeptides shorter than five residues are hydrolyzed (such as succinyl-Leu-Tyr-|-NHMec, and Leu-Tyr-Leu-|-Tyr-Trp, in which cleavage of the -Tyr-|-Leu- and -Tyr-|-Trp bonds also occurs).. In terms of biological role, cleaves peptides in various proteins in a process that requires ATP hydrolysis. Has a chymotrypsin-like activity. Plays a major role in the degradation of misfolded proteins. The polypeptide is ATP-dependent Clp protease proteolytic subunit (Dehalococcoides mccartyi (strain ATCC BAA-2266 / KCTC 15142 / 195) (Dehalococcoides ethenogenes (strain 195))).